The following is a 118-amino-acid chain: MATYGMANERLRALEEIEREIAAILLNAGNVILELSKEKPNERVLDKQATQFTASVQRVESELSGQIRYLTQVATGQPHEGSSYSARKDGTMALNRIDYARVKLAELSRTCDQMLEQP.

This sequence belongs to the Mediator complex subunit 11 family. As to quaternary structure, component of the Mediator complex.

The protein resides in the nucleus. Component of the Mediator complex, a coactivator involved in the regulated transcription of nearly all RNA polymerase II-dependent genes. Mediator functions as a bridge to convey information from gene-specific regulatory proteins to the basal RNA polymerase II transcription machinery. Mediator is recruited to promoters by direct interactions with regulatory proteins and serves as a scaffold for the assembly of a functional pre-initiation complex with RNA polymerase II and the general transcription factors. In Xenopus tropicalis (Western clawed frog), this protein is Mediator of RNA polymerase II transcription subunit 11 (med11).